The following is a 281-amino-acid chain: NADPH-dependent 7-cyano-7-deazaguanine reductase (281 aa).

88–90 is a substrate binding site; sequence IES. Position 90-91 (90-91) interacts with NADPH; sequence SK. The active-site Thioimide intermediate is C189. D196 acts as the Proton donor in catalysis. 228-229 contributes to the substrate binding site; sequence HE. 257–258 lines the NADPH pocket; that stretch reads RG.

It belongs to the GTP cyclohydrolase I family. QueF type 2 subfamily. Homodimer.

Its subcellular location is the cytoplasm. It carries out the reaction 7-aminomethyl-7-carbaguanine + 2 NADP(+) = 7-cyano-7-deazaguanine + 2 NADPH + 3 H(+). It functions in the pathway tRNA modification; tRNA-queuosine biosynthesis. In terms of biological role, catalyzes the NADPH-dependent reduction of 7-cyano-7-deazaguanine (preQ0) to 7-aminomethyl-7-deazaguanine (preQ1). This is NADPH-dependent 7-cyano-7-deazaguanine reductase from Yersinia pseudotuberculosis serotype O:1b (strain IP 31758).